A 120-amino-acid chain; its full sequence is U13-lycotoxin-Ls1f (120 aa).

The signal sequence occupies residues 1–19 (MKILFVLISILYAVYRFSS). The propeptide occupies 20–54 (EEDVDSAYLANELEPVEDINSEQYAALEPKEEQER). 4 cysteine pairs are disulfide-bonded: Cys-56-Cys-70, Cys-63-Cys-76, Cys-69-Cys-87, and Cys-78-Cys-85. Positions 56–95 (CAGMGQDCKDDCDCCLNIATCNCWFGRYFCSCTFGDYQTC) constitute an Agouti domain.

Belongs to the neurotoxin 05 (agouti) family. Contains 6 disulfide bonds. As to expression, expressed by the venom gland.

The protein localises to the secreted. This chain is U13-lycotoxin-Ls1f, found in Lycosa singoriensis (Wolf spider).